A 274-amino-acid chain; its full sequence is Protein STAY-GREEN, chloroplastic (274 aa).

A chloroplast-targeting transit peptide spans 1–48 (MAAATSTMSLLPPITQQQRWHAADSLVVLASRCHNSRRRRRCRYVVPR).

This sequence belongs to the staygreen family. As to quaternary structure, interacts with LHCII complex. In terms of tissue distribution, expressed in leaves, roots and developing seeds.

It localises to the plastid. Its subcellular location is the chloroplast membrane. The protein localises to the chloroplast stroma. Its function is as follows. Involved in the disassembling mechanism of the intact light-harvesting complex of photosystem II (LHCII) in the thylakoid membranes. Required to trigger chlorophyll degradation during natural and dark-induced leaf senescence. The polypeptide is Protein STAY-GREEN, chloroplastic (SGR) (Oryza sativa subsp. japonica (Rice)).